A 359-amino-acid chain; its full sequence is RNA-binding protein 4B (359 aa).

2 RRM domains span residues 2-72 and 78-148; these read VKLF…ASKN and TKLH…LSTS. Residues 160–177 form a CCHC-type zinc finger; the sequence is SGCYRCGKEGHWSKECPV. The interval 196–359 is interaction with TNPO3; that stretch reads AVRTPYTMGY…YVDRARYSAF (164 aa).

Interacts with TNPO3, which may mediate nuclear import of the protein. Expressed in liver and kidney (at protein level). Ubiquitously expressed.

It is found in the nucleus. Its subcellular location is the nucleolus. In terms of biological role, required for the translational activation of PER1 mRNA in response to circadian clock. Binds directly to the 3'-UTR of the PER1 mRNA. The protein is RNA-binding protein 4B (RBM4B) of Homo sapiens (Human).